The chain runs to 553 residues: MKKKMSKLNARVHDFSMFKGNHIPRSKIHIPHKTIRAFNVGEIIPIYQTPVYPGEHIKMDLTSLYRPSTFIVPPMDDLIVDTYAFAVPWRIVWKDLEKFFGENSDSWDVKNAPPVPDIVAPSGGWDYGTLADHFGITPKVPGIRVKSLRFRAYAKIINDWFRDQNLSSECALTLDSSNSQGSNGSNQVTDIQLGGKPYIANKYHDYFTSCLPAPQKGAPTTLNVGGMAPVTTKFRDVPNLSGTPLIFRDNKGRTIKTGQLGIGPVDAGFLVAQNTAQAANGERAIPSNLWADLSNATGISISDLRLAITYQHYKEMDARGGTRYVEFTLNHFGVHTADARLQRSEFLGGHSQSLLVQSVPQTSSTVEKMTPQGNLAAFSETMIQNNYLVNKTFTEHSYIIVLAVVRYKHTYQQGIEADWFRGQDKFDMYDPLLANISEQPVKNREIMVQGNSQDNEIFGFQEAWADLRFKPNSVAGVMRSSHPQSLDYWHFADHYAQLPKLSSEWLKEDYKNVDRTLALKASDNTPQLRVDFMFNTIAEKPMPLYSTPGLRRI.

This sequence belongs to the microviridae F protein family.

Its subcellular location is the virion. The protein localises to the host cytoplasm. Functionally, assembles to form an icosahedral capsid with a T=1 symmetry. The sequence is that of Capsid protein VP1 from Spiroplasma virus 4 (SpV4).